We begin with the raw amino-acid sequence, 425 residues long: Serine hydroxymethyltransferase (425 aa).

(6S)-5,6,7,8-tetrahydrofolate is bound by residues L124 and 128–130 (GHL). K233 is subject to N6-(pyridoxal phosphate)lysine.

The protein belongs to the SHMT family. As to quaternary structure, homodimer. Pyridoxal 5'-phosphate is required as a cofactor.

It localises to the cytoplasm. The catalysed reaction is (6R)-5,10-methylene-5,6,7,8-tetrahydrofolate + glycine + H2O = (6S)-5,6,7,8-tetrahydrofolate + L-serine. It participates in one-carbon metabolism; tetrahydrofolate interconversion. The protein operates within amino-acid biosynthesis; glycine biosynthesis; glycine from L-serine: step 1/1. In terms of biological role, catalyzes the reversible interconversion of serine and glycine with tetrahydrofolate (THF) serving as the one-carbon carrier. This reaction serves as the major source of one-carbon groups required for the biosynthesis of purines, thymidylate, methionine, and other important biomolecules. Also exhibits THF-independent aldolase activity toward beta-hydroxyamino acids, producing glycine and aldehydes, via a retro-aldol mechanism. The polypeptide is Serine hydroxymethyltransferase (Clavibacter sepedonicus (Clavibacter michiganensis subsp. sepedonicus)).